We begin with the raw amino-acid sequence, 357 residues long: Alanine racemase (357 aa).

Lys35 acts as the Proton acceptor; specific for D-alanine in catalysis. N6-(pyridoxal phosphate)lysine is present on Lys35. A substrate-binding site is contributed by Arg130. Catalysis depends on Tyr255, which acts as the Proton acceptor; specific for L-alanine. Met303 provides a ligand contact to substrate.

It belongs to the alanine racemase family. Pyridoxal 5'-phosphate is required as a cofactor.

The catalysed reaction is L-alanine = D-alanine. It functions in the pathway amino-acid biosynthesis; D-alanine biosynthesis; D-alanine from L-alanine: step 1/1. Functionally, catalyzes the interconversion of L-alanine and D-alanine. May also act on other amino acids. This Nitrosospira multiformis (strain ATCC 25196 / NCIMB 11849 / C 71) protein is Alanine racemase (alr).